The chain runs to 95 residues: Aspartyl/glutamyl-tRNA(Asn/Gln) amidotransferase subunit C (95 aa).

It belongs to the GatC family. Heterotrimer of A, B and C subunits.

It catalyses the reaction L-glutamyl-tRNA(Gln) + L-glutamine + ATP + H2O = L-glutaminyl-tRNA(Gln) + L-glutamate + ADP + phosphate + H(+). The enzyme catalyses L-aspartyl-tRNA(Asn) + L-glutamine + ATP + H2O = L-asparaginyl-tRNA(Asn) + L-glutamate + ADP + phosphate + 2 H(+). Its function is as follows. Allows the formation of correctly charged Asn-tRNA(Asn) or Gln-tRNA(Gln) through the transamidation of misacylated Asp-tRNA(Asn) or Glu-tRNA(Gln) in organisms which lack either or both of asparaginyl-tRNA or glutaminyl-tRNA synthetases. The reaction takes place in the presence of glutamine and ATP through an activated phospho-Asp-tRNA(Asn) or phospho-Glu-tRNA(Gln). The sequence is that of Aspartyl/glutamyl-tRNA(Asn/Gln) amidotransferase subunit C from Allorhizobium ampelinum (strain ATCC BAA-846 / DSM 112012 / S4) (Agrobacterium vitis (strain S4)).